The primary structure comprises 466 residues: RuvB-like helicase 2 (466 aa).

74-81 is a binding site for ATP; the sequence is GPPSTGKT.

The protein belongs to the RuvB family. May form heterododecamers with RVB1. Component of the SWR1 chromatin remodeling complex, the INO80 chromatin remodeling complex, and of the R2TP complex.

Its subcellular location is the nucleus. The enzyme catalyses ATP + H2O = ADP + phosphate + H(+). DNA helicase which participates in several chromatin remodeling complexes, including the SWR1 and the INO80 complexes. The SWR1 complex mediates the ATP-dependent exchange of histone H2A for the H2A variant HZT1 leading to transcriptional regulation of selected genes by chromatin remodeling. The INO80 complex remodels chromatin by shifting nucleosomes and is involved in DNA repair. Also involved in pre-rRNA processing. The polypeptide is RuvB-like helicase 2 (RVB2) (Yarrowia lipolytica (strain CLIB 122 / E 150) (Yeast)).